The primary structure comprises 264 residues: E3 ubiquitin-protein ligase MARCHF8 (264 aa).

The disordered stretch occupies residues 15 to 47 (LGHSVSRSSNISKAGSPTSVSAPSSFPRTSVTP). Over residues 17-47 (HSVSRSSNISKAGSPTSVSAPSSFPRTSVTP) the composition is skewed to polar residues. The RING-CH-type zinc finger occupies 45-106 (VTPSSQDICR…ELCKFEFIME (62 aa)). Zn(2+) is bound by residues cysteine 53, cysteine 56, cysteine 70, cysteine 72, histidine 80, cysteine 83, cysteine 96, and cysteine 99. Transmembrane regions (helical) follow at residues 130–150 (CSVT…YVLI) and 170–190 (FWTK…FMYV).

It localises to the cytoplasmic vesicle membrane. It is found in the lysosome membrane. The protein resides in the early endosome membrane. The enzyme catalyses S-ubiquitinyl-[E2 ubiquitin-conjugating enzyme]-L-cysteine + [acceptor protein]-L-lysine = [E2 ubiquitin-conjugating enzyme]-L-cysteine + N(6)-ubiquitinyl-[acceptor protein]-L-lysine.. Its pathway is protein modification; protein ubiquitination. Functionally, E3 ubiquitin-protein ligase that mediates ubiquitination of cd86 and MHC class II proteins, such as hla-dr alpha and beta, and promotes their subsequent endocytosis and sorting to lysosomes via multivesicular bodies. In Xenopus tropicalis (Western clawed frog), this protein is E3 ubiquitin-protein ligase MARCHF8 (marchf8).